The primary structure comprises 211 residues: MGVRAQQKERTRRSLVEAAFSQLSAERSFASLSLREVAREAGIAPTSFYRHFRDVDELGLTMVDESGLMLRQLMRQARQRIAKGGSVIRTSVSTFMEFIGNNPNAFRLLLRERSGTSAAFRAAVAREIQHFIAELADYLELENHMPRAFTEAQAEAMVTIVFSAGAEALDVSPEQRGQLEERLVLQLRMISKGAYYWYRREQEKMAQNSDK.

The HTH tetR-type domain occupies 10–70; it reads RTRRSLVEAA…TMVDESGLML (61 aa). The H-T-H motif DNA-binding region spans 33–52; that stretch reads SLREVAREAGIAPTSFYRHF.

In terms of assembly, homodimer.

Its subcellular location is the cytoplasm. Its function is as follows. Represses the transcription of fabB, involved in unsaturated fatty acid (UFA) biosynthesis. By controlling UFA production, FabR directly influences the physical properties of the membrane bilayer. In Cronobacter sakazakii (strain ATCC BAA-894) (Enterobacter sakazakii), this protein is HTH-type transcriptional repressor FabR.